Here is a 158-residue protein sequence, read N- to C-terminus: uncharacterized protein (158 aa).

Residues 1 to 26 (MRASRSPPSPRRCHHHHEATGAASGA) are disordered.

This is an uncharacterized protein from Homo sapiens (Human).